Consider the following 487-residue polypeptide: Histamine H1 receptor (487 aa).

Topologically, residues 1–29 (MSLPNSSCLLEDKMCEGNKTTMASPQLMP) are extracellular. N-linked (GlcNAc...) asparagine glycosylation is found at Asn-5 and Asn-18. Residues 30–50 (LVVVLSTISLVTVGLNLLVLY) traverse the membrane as a helical segment. The Cytoplasmic segment spans residues 51–64 (AVRSERKLHTVGNL). The chain crosses the membrane as a helical span at residues 65-89 (YIVSLSVADLIVGAVVMPMNILYLL). Over 90 to 97 (MSKWSLGR) the chain is Extracellular. The chain crosses the membrane as a helical span at residues 98–123 (PLCLFWLSMDYVASTASIFSVFILCI). A disulfide bridge connects residues Cys-100 and Cys-180. Positions 107 and 112 each coordinate histamine. The tract at residues 107-112 (DYVAST) is important for agonist binding. Residues 124–144 (DRYRSVQQPLRYLKYRTKTRA) are Cytoplasmic-facing. A phosphothreonine mark is found at Thr-140 and Thr-142. The chain crosses the membrane as a helical span at residues 145 to 164 (SATILGAWFLSFLWVIPILG). Residues 165 to 188 (WNHFRQQISVRREDKCETDFYDVT) lie on the Extracellular side of the membrane. A helical transmembrane segment spans residues 189–211 (WFKVMTAIINFYLPTLLMLWFYA). Residue Asn-198 coordinates histamine. Residues 212-416 (KIYKAVQKHC…MNRERKAAKQ (205 aa)) lie on the Cytoplasmic side of the membrane. Residue Ser-230 is modified to Phosphoserine. The segment covering 238-261 (KLRPENPKGDAKKPGKESPWEVLK) has biased composition (basic and acidic residues). The tract at residues 238–286 (KLRPENPKGDAKKPGKESPWEVLKRKPKDAGGGSVLKSPSQTPKEMKSP) is disordered. A Phosphothreonine modification is found at Thr-279. Ser-344 and Ser-347 each carry phosphoserine. The disordered stretch occupies residues 345-379 (EISEDQMLGDSQSFSRTDSDTTTETAPGKGKLRSG). Polar residues predominate over residues 353–369 (GDSQSFSRTDSDTTTET). Phosphoserine is present on residues Ser-380, Ser-396, and Ser-398. The helical transmembrane segment at 417–440 (LGFIMAAFILCWIPYFIFFMVIAF) threads the bilayer. The tract at residues 424 to 428 (FILCW) is important for agonist binding. Tyr-431 is a histamine binding site. A disulfide bridge links Cys-441 with Cys-444. Residues 441–446 (CKNCCN) lie on the Extracellular side of the membrane. Residues 447-469 (EHLHMFTIWLGYINSTLNPLIYP) form a helical membrane-spanning segment. Residues 470–487 (LCNENFKKTFKRILHIRS) lie on the Cytoplasmic side of the membrane.

The protein belongs to the G-protein coupled receptor 1 family. In terms of processing, phosphorylation at sites in the second and third cytoplasmic loops independently contribute to agonist-induced receptor down-regulation.

The protein localises to the cell membrane. Its function is as follows. G-protein-coupled receptor for histamine, a biogenic amine that functions as an immune modulator and a neurotransmitter. Through the H1 receptor, histamine mediates the contraction of smooth muscles and increases capillary permeability due to contraction of terminal venules. Also mediates neurotransmission in the central nervous system and thereby regulates circadian rhythms, emotional and locomotor activities as well as cognitive functions. The polypeptide is Histamine H1 receptor (Pongo pygmaeus (Bornean orangutan)).